The following is a 28-amino-acid chain: fur leader peptide (28 aa).

Cotranscribed with fur, it is essential for fur translation. The fur ribosomal binding site (RBS) is occluded by the 5'-mRNA secondary structure, which is opened by uof translation. This is fur leader peptide (uof) from Escherichia coli (strain K12).